The following is a 1310-amino-acid chain: Adhesion G protein-coupled receptor A3 (1310 aa).

The first 27 residues, 1-27 (MEPPPPLLLLPLALLALLWGGERGAAA), serve as a signal peptide directing secretion. Residues 28–70 (LPAGCKHDGRARGTGRAAAAAEGKVVCSSLELAQVLPPDTLPN) form the LRRNT domain. Residues 28–747 (LPAGCKHDGR…TELYTPAASL (720 aa)) are Extracellular-facing. Asn-70 and Asn-87 each carry an N-linked (GlcNAc...) asparagine glycan. LRR repeat units follow at residues 71 to 92 (RTVT…SFSG), 95 to 116 (LLER…AFWG), 119 to 140 (SLKR…VFRG), and 143 to 164 (NLVR…TFDY). 10 N-linked (GlcNAc...) asparagine glycosylation sites follow: Asn-148, Asn-195, Asn-290, Asn-321, Asn-422, Asn-442, Asn-581, Asn-641, Asn-676, and Asn-717. Residues 176–226 (EYLLCDCNILWMHRWVKERNITVRDTRCVYPKSLQAQPVTGVKQELLTCDP) form the LRRCT domain. An Ig-like domain is found at 231 to 329 (PSFYMTPSHR…GNNTRTVDIV (99 aa)). The cysteines at positions 253 and 313 are disulfide-linked. In terms of domain architecture, GAIN-B spans 572-739 (LDKQLSFKCN…AVLMDLTGTE (168 aa)). The segment at 690–739 (AAQWDFDLLNGQGGWKSDGCCILYSDENITTIQCGSLGNYAVLMDLTGTE) is GPS. The cysteines at positions 709 and 723 are disulfide-linked. Residues 748 to 768 (LHPVVYTTAITLLLCLLAVII) traverse the membrane as a helical segment. At 769 to 785 (SYMYHHSLIRISLKSWH) the chain is on the cytoplasmic side. A helical membrane pass occupies residues 786 to 806 (MLVNLCFHILLTCVVFVGGIT). At 807 to 815 (QTRNASVCQ) the chain is on the extracellular side. Asn-810 carries an N-linked (GlcNAc...) asparagine glycan. The chain crosses the membrane as a helical span at residues 816-836 (AVGIILHYSTLATVLWVGVTA). The Cytoplasmic segment spans residues 837 to 865 (RNIYKQVTKKAKRCQDPDEPPAPPRPMLR). The helical transmembrane segment at 866 to 886 (FYLIGGGIPIIVCGITAAANI) threads the bilayer. The Extracellular segment spans residues 887–908 (KNYGSRPSAPYCWMAWEPSLGA). The chain crosses the membrane as a helical span at residues 909 to 929 (FYGPASFITFVNCMYFLSIFI). The Cytoplasmic portion of the chain corresponds to 930–985 (QLKRHPERKYELKEPTEEQQRLAANENGEINHQDSMSLSLISTSTLENEHSFQSQL). A helical transmembrane segment spans residues 986–1006 (LGASLTLLLYVILWMFGAMAV). Over 1007–1013 (SLYYPLD) the chain is Extracellular. A helical transmembrane segment spans residues 1014–1034 (LVFSFFFGATCLSFSAFMMVH). Topologically, residues 1035 to 1310 (HCINREDVRL…TGLWKHETTV (276 aa)) are cytoplasmic. Disordered regions lie at residues 1065 to 1084 (PPNS…SSAE), 1187 to 1208 (VEGS…GHSR), and 1221 to 1264 (YNPP…ADLE). Residues 1222 to 1239 (NPPQQDSSDACSTLPKSS) are compositionally biased toward polar residues. Positions 1308–1310 (TTV) match the PDZ-binding motif.

This sequence belongs to the G-protein coupled receptor 2 family. Adhesion G-protein coupled receptor (ADGR) subfamily. As to quaternary structure, interacts (via PDZ-binding motif) with DLG1. In terms of tissue distribution, expressed by spermatogonial progenitor cells located within the outer cell layer of the seminiferous tubule and by multipotent adult spermatogonial-derived stem cells.

Its subcellular location is the membrane. Its function is as follows. Orphan receptor that may have a role in planar cell polarity pathway. This chain is Adhesion G protein-coupled receptor A3 (Adgra3), found in Mus musculus (Mouse).